Here is a 138-residue protein sequence, read N- to C-terminus: ATP synthase epsilon chain (138 aa).

It belongs to the ATPase epsilon chain family. In terms of assembly, F-type ATPases have 2 components, CF(1) - the catalytic core - and CF(0) - the membrane proton channel. CF(1) has five subunits: alpha(3), beta(3), gamma(1), delta(1), epsilon(1). CF(0) has three main subunits: a, b and c.

The protein localises to the cell inner membrane. Its function is as follows. Produces ATP from ADP in the presence of a proton gradient across the membrane. This Bartonella quintana (strain Toulouse) (Rochalimaea quintana) protein is ATP synthase epsilon chain.